A 410-amino-acid chain; its full sequence is Aspartate aminotransferase (410 aa).

The L-aspartate site is built by Gly-47, Trp-135, and Asn-185. Lys-249 bears the N6-(pyridoxal phosphate)lysine mark. Residue Arg-385 participates in L-aspartate binding.

The protein belongs to the class-I pyridoxal-phosphate-dependent aminotransferase family. In terms of assembly, homodimer. Requires pyridoxal 5'-phosphate as cofactor.

It is found in the cytoplasm. It carries out the reaction L-aspartate + 2-oxoglutarate = oxaloacetate + L-glutamate. It catalyses the reaction L-2-aminoadipate + 2-oxoglutarate = 2-oxoadipate + L-glutamate. Catalyzes the reversible conversion of aspartate and 2-oxoglutarate to glutamate and oxaloacetate. Genetic evidence shows that this protein is involved in L-lysine catabolism. It may have 2-aminoadipate:2-oxoglutarate aminotransferase activity. This Rhizobium meliloti (strain 1021) (Ensifer meliloti) protein is Aspartate aminotransferase (aatB).